A 269-amino-acid chain; its full sequence is Putative hydro-lyase Aave_3512 (269 aa).

Belongs to the D-glutamate cyclase family.

This chain is Putative hydro-lyase Aave_3512, found in Paracidovorax citrulli (strain AAC00-1) (Acidovorax citrulli).